Here is a 235-residue protein sequence, read N- to C-terminus: Large ribosomal subunit protein uL1 (235 aa).

This sequence belongs to the universal ribosomal protein uL1 family. Part of the 50S ribosomal subunit.

Binds directly to 23S rRNA. The L1 stalk is quite mobile in the ribosome, and is involved in E site tRNA release. Functionally, protein L1 is also a translational repressor protein, it controls the translation of the L11 operon by binding to its mRNA. The polypeptide is Large ribosomal subunit protein uL1 (Blochmanniella floridana).